A 1063-amino-acid polypeptide reads, in one-letter code: Cellulose synthase A catalytic subunit 7 [UDP-forming] (1063 aa).

Residues 1–213 (MDTASVTGGE…IPSSKINPYR (213 aa)) lie on the Cytoplasmic side of the membrane. Zn(2+)-binding residues include Cys18, Cys21, Cys37, Cys40, Cys45, Cys48, Cys60, and Cys63. An RING-type; degenerate zinc finger spans residues 18-64 (CRVCGEEVAAREDGKPFVACAECGFPVCKPCYEYERSEGTQCCPQCN). Residues 116–154 (NGEQPAQKWRPGGPALSSFTGSVAGKDLEQEREMEGGME) form a disordered region. Residues 141 to 154 (KDLEQEREMEGGME) are compositionally biased toward basic and acidic residues. The helical transmembrane segment at 214 to 234 (IVIVLRLVVLCFFLKFRITTP) threads the bilayer. At 235–237 (AMD) the chain is on the extracellular side. A helical transmembrane segment spans residues 238–258 (AVPLWLASVICELWFALSWIL). Residues 259–845 (DQLPKWSPVT…TNTIVYPFTS (587 aa)) lie on the Cytoplasmic side of the membrane. UDP-alpha-D-glucose-binding residues include Ser297, Lys303, Glu304, and Asp333. Residue Asp333 is part of the active site. Residues 387–414 (VKERRAMKREYEEFKVRINALVAKAQKK) adopt a coiled-coil conformation. Lys474 is a UDP-alpha-D-glucose binding site. Mn(2+)-binding residues include Lys475 and Asp499. Asp762 is an active-site residue. A helical transmembrane segment spans residues 846 to 866 (IPLLAYCTIPAVCLLTGKFII). Residues 867 to 871 (PTLNN) are Extracellular-facing. A helical transmembrane segment spans residues 872-892 (LASIWFIALFLSIIATGVLEL). The Cytoplasmic segment spans residues 893–907 (RWSGVSIEDWWRNEQ). The chain crosses the membrane as a helical span at residues 908–928 (FWVIGGVSAHLFAVFQGLLKV). The Extracellular segment spans residues 929–959 (LGGVDTNFTVTSKAAADETDAFGELYLFKWT). A glycan (N-linked (GlcNAc...) asparagine) is linked at Asn935. The chain crosses the membrane as a helical span at residues 960-980 (TLLVPPTTLIIINMVGIVAGV). Topologically, residues 981 to 991 (SDAVNNGYGSW) are cytoplasmic. Residues 992–1012 (GPLFGKLFFSFWVILHLYPFL) traverse the membrane as a helical segment. Over 1013-1021 (KGLMGRQNR) the chain is Extracellular. Residues 1022–1042 (TPTIVVLWSILLASIFSLVWV) form a helical membrane-spanning segment. The Cytoplasmic portion of the chain corresponds to 1043 to 1063 (RIDPFIPKPKGPVLKPCGVSC).

Belongs to the glycosyltransferase 2 family. Plant cellulose synthase subfamily. Requires Mn(2+) as cofactor. Zn(2+) serves as cofactor.

The protein localises to the cell membrane. The catalysed reaction is [(1-&gt;4)-beta-D-glucosyl](n) + UDP-alpha-D-glucose = [(1-&gt;4)-beta-D-glucosyl](n+1) + UDP + H(+). Its pathway is glycan metabolism; plant cellulose biosynthesis. Catalytic subunit of cellulose synthase terminal complexes ('rosettes'), required for beta-1,4-glucan microfibril crystallization, a major mechanism of the cell wall formation. Involved in the secondary cell wall formation. The sequence is that of Cellulose synthase A catalytic subunit 7 [UDP-forming] (CESA7) from Oryza sativa subsp. japonica (Rice).